Reading from the N-terminus, the 393-residue chain is NAD(P)H-quinone oxidoreductase subunit H, chloroplastic (393 aa).

The protein belongs to the complex I 49 kDa subunit family. In terms of assembly, NDH is composed of at least 16 different subunits, 5 of which are encoded in the nucleus.

The protein localises to the plastid. It localises to the chloroplast thylakoid membrane. It catalyses the reaction a plastoquinone + NADH + (n+1) H(+)(in) = a plastoquinol + NAD(+) + n H(+)(out). The enzyme catalyses a plastoquinone + NADPH + (n+1) H(+)(in) = a plastoquinol + NADP(+) + n H(+)(out). NDH shuttles electrons from NAD(P)H:plastoquinone, via FMN and iron-sulfur (Fe-S) centers, to quinones in the photosynthetic chain and possibly in a chloroplast respiratory chain. The immediate electron acceptor for the enzyme in this species is believed to be plastoquinone. Couples the redox reaction to proton translocation, and thus conserves the redox energy in a proton gradient. The protein is NAD(P)H-quinone oxidoreductase subunit H, chloroplastic of Cucumis sativus (Cucumber).